The following is a 255-amino-acid chain: F-box/SPRY domain-containing protein 1 (255 aa).

One can recognise an F-box domain in the interval 3–51; the sequence is DRVAALCNYNVLEVVFSYLDLNDLGRCSQVCKSWFHFLNDENSDVWRFH. The B30.2/SPRY domain maps to 61 to 253; sequence TKSELLSPVP…VSMVYCGTPL (193 aa).

The protein belongs to the FBXO45/Fsn family. As to quaternary structure, component of an E3 ubiquitin ligase complex composed of hiw and Fsn.

The protein resides in the synapse. Its pathway is protein modification; protein ubiquitination. Functionally, required in the presynaptic motoneuron to down-regulate the levels of wnd and restrain synaptic terminal growth at the neuromuscular junction (NMJ). The sequence is that of F-box/SPRY domain-containing protein 1 from Drosophila persimilis (Fruit fly).